Reading from the N-terminus, the 146-residue chain is uncharacterized protein (146 aa).

The Toprim domain occupies 31 to 119; it reads EKVMIVEGKS…RAYKEVAAAP (89 aa).

This is an uncharacterized protein from Bacillus subtilis (strain 168).